The primary structure comprises 208 residues: Protein-L-isoaspartate O-methyltransferase (208 aa).

Residue Ser59 is part of the active site.

Belongs to the methyltransferase superfamily. L-isoaspartyl/D-aspartyl protein methyltransferase family.

The protein resides in the cytoplasm. It carries out the reaction [protein]-L-isoaspartate + S-adenosyl-L-methionine = [protein]-L-isoaspartate alpha-methyl ester + S-adenosyl-L-homocysteine. Functionally, catalyzes the methyl esterification of L-isoaspartyl residues in peptides and proteins that result from spontaneous decomposition of normal L-aspartyl and L-asparaginyl residues. It plays a role in the repair and/or degradation of damaged proteins. In Sodalis glossinidius (strain morsitans), this protein is Protein-L-isoaspartate O-methyltransferase.